Consider the following 656-residue polypeptide: MSWQWRRRQWPSPLLLILIVLHLVSSSSAIDFLYNSFSSVTNRTDVILIEDSRVESTVISLINDSDPLSFGRVFYPQKLTIIPDPTRNPTRLSSFSTSFVFSILPDISTSPGFGLCFVLSNSTSPPNAISSQYFGLFTNATVRFNAPLLAVEFDTGRNSEVNDIDDNHVGIDLNNIESTTSVTAGYYDSVNGSFVRFNMRNGNNVRAWIDFDGPNFQINVSVAPVGVLRPRRPTLTFRDPVIANYVSADMYAGFSASKTNWNEARRILAWSLSDTGALREINTTNLPVFFLENSSSSLSTGAIAGIVIGCVVFVALIGFGGYLIWKKLMREEEEEEIEEWELEFWPHRFSYEELAAATEVFSNDRLLGSGGFGKVYRGILSNNSEIAVKCVNHDSKQGLREFMAEISSMGRLQHKNLVQMRGWCRRKNELMLVYDYMPNGSLNQWIFDNPKEPMPWRRRRQVINDVAEGLNYLHHGWDQVVIHRDIKSSNILLDSEMRGRLGDFGLAKLYEHGGAPNTTRVVGTLGYLAPELASASAPTEASDVYSFGVVVLEVVSGRRPIEYAEEEDMVLVDWVRDLYGGGRVVDAADERVRSECETMEEVELLLKLGLACCHPDPAKRPNMREIVSLLLGSPQEDLLTGLTPAAAAADSTAAHA.

A signal peptide spans 1-29 (MSWQWRRRQWPSPLLLILIVLHLVSSSSA). Positions 30-273 (IDFLYNSFSS…ARRILAWSLS (244 aa)) are legume-lectin like. Over 30–304 (IDFLYNSFSS…SSSLSTGAIA (275 aa)) the chain is Extracellular. N-linked (GlcNAc...) asparagine glycans are attached at residues N42, N63, N121, N139, N191, N219, N282, and N293. A helical membrane pass occupies residues 305–325 (GIVIGCVVFVALIGFGGYLIW). Topologically, residues 326-656 (KKLMREEEEE…AAADSTAAHA (331 aa)) are cytoplasmic. In terms of domain architecture, Protein kinase spans 361-639 (FSNDRLLGSG…LLGSPQEDLL (279 aa)). ATP is bound by residues 367–375 (LGSGGFGKV) and K389. The Proton acceptor role is filled by D485.

It in the C-terminal section; belongs to the protein kinase superfamily. Ser/Thr protein kinase family. In the N-terminal section; belongs to the leguminous lectin family.

The protein localises to the cell membrane. The enzyme catalyses L-seryl-[protein] + ATP = O-phospho-L-seryl-[protein] + ADP + H(+). The catalysed reaction is L-threonyl-[protein] + ATP = O-phospho-L-threonyl-[protein] + ADP + H(+). In terms of biological role, involved in resistance response to the pathogenic oomycetes Phytophthora infestans and Phytophthora capsici and to the pathogenic bacteria Pseudomonas syringae. This Arabidopsis thaliana (Mouse-ear cress) protein is L-type lectin-domain containing receptor kinase S.1.